The following is a 625-amino-acid chain: Probable potassium transport system protein Kup 2 (625 aa).

12 helical membrane-spanning segments follow: residues 10–30 (LAAL…TSPL), 47–67 (GVHL…VVTL), 104–124 (VLLL…VITP), 140–160 (PAFK…LFAV), 172–192 (FGPV…AEII), 214–234 (GWHM…VEAL), 250–270 (WLGL…ALLM), 283–303 (LFPQ…TVIA), 347–367 (WLLL…SALA), 369–389 (AYGI…FFVV), 396–416 (PLPV…LLVV), and 422–442 (FFQG…VMAT).

It belongs to the HAK/KUP transporter (TC 2.A.72) family.

It is found in the cell inner membrane. The catalysed reaction is K(+)(in) + H(+)(in) = K(+)(out) + H(+)(out). Transport of potassium into the cell. Likely operates as a K(+):H(+) symporter. This Albidiferax ferrireducens (strain ATCC BAA-621 / DSM 15236 / T118) (Rhodoferax ferrireducens) protein is Probable potassium transport system protein Kup 2.